The sequence spans 374 residues: DNA-directed RNA polymerase subunit alpha (374 aa).

The segment at 1–270 (MIFDEDSSSV…DQFQQFINFD (270 aa)) is alpha N-terminal domain (alpha-NTD). Residues 282–374 (KDVLPYDSNL…ESLSKQYSEE (93 aa)) are alpha C-terminal domain (alpha-CTD).

The protein belongs to the RNA polymerase alpha chain family. As to quaternary structure, homodimer. The RNAP catalytic core consists of 2 alpha, 1 beta, 1 beta' and 1 omega subunit. When a sigma factor is associated with the core the holoenzyme is formed, which can initiate transcription.

The catalysed reaction is RNA(n) + a ribonucleoside 5'-triphosphate = RNA(n+1) + diphosphate. Functionally, DNA-dependent RNA polymerase catalyzes the transcription of DNA into RNA using the four ribonucleoside triphosphates as substrates. In Ehrlichia ruminantium (strain Welgevonden), this protein is DNA-directed RNA polymerase subunit alpha.